Reading from the N-terminus, the 300-residue chain is Alpha-ketoglutarate-dependent dioxygenase alkB homolog 4 (300 aa).

The residue at position 2 (alanine 2) is an N-acetylalanine. The region spanning proline 148–serine 272 is the Fe2OG dioxygenase domain. The Fe cation site is built by histidine 167, aspartate 169, and histidine 252. Position 263 (arginine 263) interacts with 2-oxoglutarate.

It belongs to the alkB family. Interacts with ZFHX3, MLLT3, MLLT1, HSF4, EP300, TES, EIF3C, MTMR6 and PSMA6. The cofactor is Fe(2+).

The protein localises to the cytoplasm. Its subcellular location is the nucleus. It localises to the nucleolus. It is found in the midbody. It catalyses the reaction an N(6)-methyl-2'-deoxyadenosine in DNA + 2-oxoglutarate + O2 = a 2'-deoxyadenosine in DNA + formaldehyde + succinate + CO2. The enzyme catalyses N(6)-methyl-L-lysyl-[protein] + 2-oxoglutarate + O2 = L-lysyl-[protein] + formaldehyde + succinate + CO2. Its function is as follows. Dioxygenase that mediates demethylation of actin monomethylated at 'Lys-84' (K84me1), thereby acting as a regulator of actomyosin-processes. Demethylation of actin K84me1 is required for maintaining actomyosin dynamics supporting normal cleavage furrow ingression during cytokinesis and cell migration. In addition to proteins, also demethylates DNA: specifically demethylates DNA methylated on the 6th position of adenine (N(6)-methyladenosine) DNA, thereby regulating Polycomb silencing. This chain is Alpha-ketoglutarate-dependent dioxygenase alkB homolog 4, found in Mus musculus (Mouse).